We begin with the raw amino-acid sequence, 339 residues long: Bifunctional phosphoglucose/phosphomannose isomerase (339 aa).

In terms of domain architecture, SIS spans 22-164; that stretch reads ISVNVKAEDI…IEPVDDQIEE (143 aa). D-fructose 6-phosphate is bound by residues Gly41, Ser42, Ser83, Ser85, Thr88, and Arg135. Glu221 (proton acceptor) is an active-site residue. D-fructose 6-phosphate-binding residues include His237 and Lys331. His237 (proton donor) is an active-site residue. Residue Lys331 is the Proton acceptor of the active site.

The protein belongs to the PGI/PMI family. Homodimer.

It catalyses the reaction alpha-D-glucose 6-phosphate = beta-D-fructose 6-phosphate. The catalysed reaction is D-mannose 6-phosphate = D-fructose 6-phosphate. Functionally, dual specificity isomerase that catalyzes the isomerization of both glucose-6-phosphate and mannose-6-phosphate to fructose-6-phosphate. This Caldicellulosiruptor bescii (strain ATCC BAA-1888 / DSM 6725 / KCTC 15123 / Z-1320) (Anaerocellum thermophilum) protein is Bifunctional phosphoglucose/phosphomannose isomerase.